Here is a 230-residue protein sequence, read N- to C-terminus: MAHPTQLGFQDAASPVMEELLHFHDHALMIVFLISALVLYVIITTVSTKLTNMYILDSQEIEIVWTVLPALILILIALPSLRILYLMDEINDPHLTIKAMGHQWYWSYEYTDYENLSFDSYMIPTQDLTPGQFRLLETDHRMVVPMESPIRILVSAEDVLHSWALPAMGVKMDAVPGRLNQTAFIASRPGVFYGQCSEICGANHSFMPIVVEAVPLSHFENWSTLMLKDA.

At 1 to 14 (MAHPTQLGFQDAAS) the chain is on the mitochondrial intermembrane side. A helical transmembrane segment spans residues 15 to 45 (PVMEELLHFHDHALMIVFLISALVLYVIITT). Over 46–59 (VSTKLTNMYILDSQ) the chain is Mitochondrial matrix. The helical transmembrane segment at 60–87 (EIEIVWTVLPALILILIALPSLRILYLM) threads the bilayer. Over 88 to 230 (DEINDPHLTI…NWSTLMLKDA (143 aa)) the chain is Mitochondrial intermembrane. Residues His161, Cys196, Glu198, Cys200, His204, and Met207 each contribute to the Cu cation site. Residue Glu198 coordinates Mg(2+).

It belongs to the cytochrome c oxidase subunit 2 family. In terms of assembly, component of the cytochrome c oxidase (complex IV, CIV), a multisubunit enzyme composed of 14 subunits. The complex is composed of a catalytic core of 3 subunits MT-CO1, MT-CO2 and MT-CO3, encoded in the mitochondrial DNA, and 11 supernumerary subunits COX4I, COX5A, COX5B, COX6A, COX6B, COX6C, COX7A, COX7B, COX7C, COX8 and NDUFA4, which are encoded in the nuclear genome. The complex exists as a monomer or a dimer and forms supercomplexes (SCs) in the inner mitochondrial membrane with NADH-ubiquinone oxidoreductase (complex I, CI) and ubiquinol-cytochrome c oxidoreductase (cytochrome b-c1 complex, complex III, CIII), resulting in different assemblies (supercomplex SCI(1)III(2)IV(1) and megacomplex MCI(2)III(2)IV(2)). Found in a complex with TMEM177, COA6, COX18, COX20, SCO1 and SCO2. Interacts with TMEM177 in a COX20-dependent manner. Interacts with COX20. Interacts with COX16. Requires Cu cation as cofactor.

It is found in the mitochondrion inner membrane. The enzyme catalyses 4 Fe(II)-[cytochrome c] + O2 + 8 H(+)(in) = 4 Fe(III)-[cytochrome c] + 2 H2O + 4 H(+)(out). Component of the cytochrome c oxidase, the last enzyme in the mitochondrial electron transport chain which drives oxidative phosphorylation. The respiratory chain contains 3 multisubunit complexes succinate dehydrogenase (complex II, CII), ubiquinol-cytochrome c oxidoreductase (cytochrome b-c1 complex, complex III, CIII) and cytochrome c oxidase (complex IV, CIV), that cooperate to transfer electrons derived from NADH and succinate to molecular oxygen, creating an electrochemical gradient over the inner membrane that drives transmembrane transport and the ATP synthase. Cytochrome c oxidase is the component of the respiratory chain that catalyzes the reduction of oxygen to water. Electrons originating from reduced cytochrome c in the intermembrane space (IMS) are transferred via the dinuclear copper A center (CU(A)) of subunit 2 and heme A of subunit 1 to the active site in subunit 1, a binuclear center (BNC) formed by heme A3 and copper B (CU(B)). The BNC reduces molecular oxygen to 2 water molecules using 4 electrons from cytochrome c in the IMS and 4 protons from the mitochondrial matrix. In Formosania lacustris (Oriental stream loach), this protein is Cytochrome c oxidase subunit 2 (mt-co2).